Here is a 179-residue protein sequence, read N- to C-terminus: Proteasome chaperone 3 (179 aa).

The protein belongs to the PSMG3 family. Component of the 20S proteasome chaperone. Forms a heterodimer with POC4 that binds to proteasome precursors. Interacts with POP2.

Functionally, involved in 20S proteasome assembly, facilitating the alpha-ring formation. This Saccharomyces cerevisiae (strain ATCC 204508 / S288c) (Baker's yeast) protein is Proteasome chaperone 3 (IRC25).